Here is a 431-residue protein sequence, read N- to C-terminus: Na(+)-translocating NADH-quinone reductase subunit F (431 aa).

The chain crosses the membrane as a helical span at residues 10 to 30 (IFIASTAFCALGLLLVAIILL). In terms of domain architecture, 2Fe-2S ferredoxin-type spans 41–133 (CKLRINNDDS…DMNLEIEERY (93 aa)). [2Fe-2S] cluster is bound by residues Cys-76, Cys-82, Cys-85, and Cys-117. In terms of domain architecture, FAD-binding FR-type spans 136-286 (ASSWEGTVVS…SGPYGESFMK (151 aa)). Residues 289–413 (NRPVIFLIGG…ALHNSSILTL (125 aa)) are catalytic.

The protein belongs to the NqrF family. Composed of six subunits; NqrA, NqrB, NqrC, NqrD, NqrE and NqrF. [2Fe-2S] cluster is required as a cofactor. FAD serves as cofactor.

The protein resides in the cell inner membrane. The enzyme catalyses a ubiquinone + n Na(+)(in) + NADH + H(+) = a ubiquinol + n Na(+)(out) + NAD(+). In terms of biological role, NQR complex catalyzes the reduction of ubiquinone-1 to ubiquinol by two successive reactions, coupled with the transport of Na(+) ions from the cytoplasm to the periplasm. The first step is catalyzed by NqrF, which accepts electrons from NADH and reduces ubiquinone-1 to ubisemiquinone by a one-electron transfer pathway. In Chlamydia muridarum (strain MoPn / Nigg), this protein is Na(+)-translocating NADH-quinone reductase subunit F.